Here is a 71-residue protein sequence, read N- to C-terminus: Long neurotoxin 1 (71 aa).

Cystine bridges form between cysteine 3/cysteine 20, cysteine 14/cysteine 41, cysteine 26/cysteine 30, cysteine 45/cysteine 56, and cysteine 57/cysteine 62.

The protein belongs to the three-finger toxin family. Long-chain subfamily. Type II alpha-neurotoxin sub-subfamily. Expressed by the venom gland.

The protein localises to the secreted. Its function is as follows. Binds with high affinity to muscular (alpha-1/CHRNA1) and neuronal (alpha-7/CHRNA7) nicotinic acetylcholine receptor (nAChR) and inhibits acetylcholine from binding to the receptor, thereby impairing neuromuscular and neuronal transmission. This is Long neurotoxin 1 from Naja nivea (Cape cobra).